The following is a 731-amino-acid chain: DNA topoisomerase 1 (731 aa).

Positions Lys17–Pro130 constitute a Toprim domain. Mg(2+)-binding residues include Glu23 and Asp96. Residues Asp144–Val569 form the Topo IA-type catalytic domain. An interaction with DNA region spans residues Ser178 to Gln183. The active-site O-(5'-phospho-DNA)-tyrosine intermediate is Tyr312. 3 C4-type zinc fingers span residues Cys591 to Cys617, Cys628 to Cys657, and Cys670 to Cys696.

It belongs to the type IA topoisomerase family. In terms of assembly, monomer. Mg(2+) is required as a cofactor.

It catalyses the reaction ATP-independent breakage of single-stranded DNA, followed by passage and rejoining.. Its function is as follows. Releases the supercoiling and torsional tension of DNA, which is introduced during the DNA replication and transcription, by transiently cleaving and rejoining one strand of the DNA duplex. Introduces a single-strand break via transesterification at a target site in duplex DNA. The scissile phosphodiester is attacked by the catalytic tyrosine of the enzyme, resulting in the formation of a DNA-(5'-phosphotyrosyl)-enzyme intermediate and the expulsion of a 3'-OH DNA strand. The free DNA strand then undergoes passage around the unbroken strand, thus removing DNA supercoils. Finally, in the religation step, the DNA 3'-OH attacks the covalent intermediate to expel the active-site tyrosine and restore the DNA phosphodiester backbone. This chain is DNA topoisomerase 1, found in Treponema pallidum (strain Nichols).